The sequence spans 407 residues: Peptidase T (407 aa).

H82 is a Zn(2+) binding site. D84 is an active-site residue. D143 serves as a coordination point for Zn(2+). The active-site Proton acceptor is the E177. Positions 178, 200, and 382 each coordinate Zn(2+).

Belongs to the peptidase M20B family. It depends on Zn(2+) as a cofactor.

Its subcellular location is the cytoplasm. It carries out the reaction Release of the N-terminal residue from a tripeptide.. In terms of biological role, cleaves the N-terminal amino acid of tripeptides. The sequence is that of Peptidase T from Streptococcus equi subsp. equi (strain 4047).